The chain runs to 553 residues: Fusion glycoprotein F0 (553 aa).

An N-terminal signal peptide occupies residues 1–31 (MGSRSSTRIPVPLMLTVRIMLALSCVCPTSS). Over 32–500 (LDGRPLAAAG…VNVKLTSTSA (469 aa)) the chain is Extracellular. 5 disulfides stabilise this stretch: C76–C199, C338–C347, C362–C370, C394–C399, and C401–C424. N85 carries an N-linked (GlcNAc...) asparagine; by host glycan. Positions 117-141 (LIGAIIGGVALGVATAAQITAASAL) are fusion peptide. A coiled-coil region spans residues 142–170 (IQANQNAANILRLKESIAATNEAVHEVTD). N-linked (GlcNAc...) asparagine; by host glycosylation occurs at N191. An N-linked (GlcNAc...) asparagine; by host glycan is attached at N366. N-linked (GlcNAc...) asparagine; by host glycosylation is found at N447 and N471. A coiled-coil region spans residues 466–491 (ELGNVNNSISNALDKLEESNSKLDKV). A helical membrane pass occupies residues 501 to 521 (LITYIFLTVISLVCGILSLVL). Residues 522–553 (ACYLMYKQKAQQKTLLWLGNNTLDQMRATTKM) lie on the Cytoplasmic side of the membrane. A lipid anchor (S-palmitoyl cysteine; by host) is attached at C523.

Belongs to the paramyxoviruses fusion glycoprotein family. Homotrimer of disulfide-linked F1-F2. In terms of processing, the inactive precursor F0 is glycosylated and proteolytically cleaved into F1 and F2 to be functionally active. The cleavage is mediated by cellular proteases during the transport and maturation of the polypeptide.

The protein localises to the virion membrane. It is found in the host cell membrane. Class I viral fusion protein. Under the current model, the protein has at least 3 conformational states: pre-fusion native state, pre-hairpin intermediate state, and post-fusion hairpin state. During viral and plasma cell membrane fusion, the heptad repeat (HR) regions assume a trimer-of-hairpins structure, positioning the fusion peptide in close proximity to the C-terminal region of the ectodomain. The formation of this structure appears to drive apposition and subsequent fusion of viral and plasma cell membranes. Directs fusion of viral and cellular membranes leading to delivery of the nucleocapsid into the cytoplasm. This fusion is pH independent and occurs directly at the outer cell membrane. The trimer of F1-F2 (F protein) probably interacts with HN at the virion surface. Upon HN binding to its cellular receptor, the hydrophobic fusion peptide is unmasked and interacts with the cellular membrane, inducing the fusion between cell and virion membranes. Later in infection, F proteins expressed at the plasma membrane of infected cells could mediate fusion with adjacent cells to form syncytia, a cytopathic effect that could lead to tissue necrosis. This chain is Fusion glycoprotein F0 (F), found in Newcastle disease virus (strain D26/76) (NDV).